The following is a 278-amino-acid chain: Tryptophan 2,3-dioxygenase (278 aa).

Residues 47 to 51 (FIIQH), Tyr-110, and Arg-114 each bind substrate. Residue His-236 coordinates heme. Thr-250 contributes to the substrate binding site.

Belongs to the tryptophan 2,3-dioxygenase family. In terms of assembly, homotetramer. Heme serves as cofactor.

The catalysed reaction is L-tryptophan + O2 = N-formyl-L-kynurenine. Its pathway is amino-acid degradation; L-tryptophan degradation via kynurenine pathway; L-kynurenine from L-tryptophan: step 1/2. Functionally, heme-dependent dioxygenase that catalyzes the oxidative cleavage of the L-tryptophan (L-Trp) pyrrole ring and converts L-tryptophan to N-formyl-L-kynurenine. Catalyzes the oxidative cleavage of the indole moiety. The sequence is that of Tryptophan 2,3-dioxygenase from Ruegeria pomeroyi (strain ATCC 700808 / DSM 15171 / DSS-3) (Silicibacter pomeroyi).